We begin with the raw amino-acid sequence, 159 residues long: RNA pyrophosphohydrolase (159 aa).

One can recognise a Nudix hydrolase domain in the interval 6–149 (GFRPNVGIIL…KREVYRRALK (144 aa)). The short motif at 38 to 59 (GGINPDETPEDALYRELNEEVG) is the Nudix box element.

The protein belongs to the Nudix hydrolase family. RppH subfamily. It depends on a divalent metal cation as a cofactor.

Its function is as follows. Accelerates the degradation of transcripts by removing pyrophosphate from the 5'-end of triphosphorylated RNA, leading to a more labile monophosphorylated state that can stimulate subsequent ribonuclease cleavage. The polypeptide is RNA pyrophosphohydrolase (Pseudomonas fluorescens (strain SBW25)).